A 209-amino-acid polypeptide reads, in one-letter code: Octanoyltransferase (209 aa).

Residues 30-209 (DHEPEIIYLV…IQTEFNKIFK (180 aa)) enclose the BPL/LPL catalytic domain. Substrate-binding positions include 69–76 (RGGKFTFH), 143–145 (AIG), and 156–158 (GVA). Cysteine 174 (acyl-thioester intermediate) is an active-site residue.

This sequence belongs to the LipB family.

Its subcellular location is the cytoplasm. It catalyses the reaction octanoyl-[ACP] + L-lysyl-[protein] = N(6)-octanoyl-L-lysyl-[protein] + holo-[ACP] + H(+). The protein operates within protein modification; protein lipoylation via endogenous pathway; protein N(6)-(lipoyl)lysine from octanoyl-[acyl-carrier-protein]: step 1/2. Functionally, catalyzes the transfer of endogenously produced octanoic acid from octanoyl-acyl-carrier-protein onto the lipoyl domains of lipoate-dependent enzymes. Lipoyl-ACP can also act as a substrate although octanoyl-ACP is likely to be the physiological substrate. This is Octanoyltransferase from Rickettsia africae (strain ESF-5).